The following is a 250-amino-acid chain: DNA repair protein RecO (250 aa).

This sequence belongs to the RecO family.

Involved in DNA repair and RecF pathway recombination. The protein is DNA repair protein RecO of Lactobacillus helveticus (strain DPC 4571).